A 427-amino-acid polypeptide reads, in one-letter code: UPF0229 protein YeaH (427 aa).

Positions 87–110 (RIERSQGGGGGSGSGQGQASQDGE) are disordered. Residues 92–102 (QGGGGGSGSGQ) show a composition bias toward gly residues.

Belongs to the UPF0229 family.

The polypeptide is UPF0229 protein YeaH (Escherichia coli O6:K15:H31 (strain 536 / UPEC)).